We begin with the raw amino-acid sequence, 446 residues long: tRNA-2-methylthio-N(6)-dimethylallyladenosine synthase (446 aa).

In terms of domain architecture, MTTase N-terminal spans 2–122 (KKAYVKSYGC…LPDLLRQSRE (121 aa)). Positions 11, 47, 85, 157, 161, and 164 each coordinate [4Fe-4S] cluster. A Radical SAM core domain is found at 143–375 (RNRGVTGFLT…QDLLDRQRHA (233 aa)). A TRAM domain is found at 378–440 (AASVGTLTEI…SNSLFGETLE (63 aa)).

This sequence belongs to the methylthiotransferase family. MiaB subfamily. Monomer. It depends on [4Fe-4S] cluster as a cofactor.

Its subcellular location is the cytoplasm. It catalyses the reaction N(6)-dimethylallyladenosine(37) in tRNA + (sulfur carrier)-SH + AH2 + 2 S-adenosyl-L-methionine = 2-methylsulfanyl-N(6)-dimethylallyladenosine(37) in tRNA + (sulfur carrier)-H + 5'-deoxyadenosine + L-methionine + A + S-adenosyl-L-homocysteine + 2 H(+). Catalyzes the methylthiolation of N6-(dimethylallyl)adenosine (i(6)A), leading to the formation of 2-methylthio-N6-(dimethylallyl)adenosine (ms(2)i(6)A) at position 37 in tRNAs that read codons beginning with uridine. The sequence is that of tRNA-2-methylthio-N(6)-dimethylallyladenosine synthase from Methylorubrum extorquens (strain PA1) (Methylobacterium extorquens).